The chain runs to 355 residues: UDP-3-O-acylglucosamine N-acyltransferase (355 aa).

Residue His-258 is the Proton acceptor of the active site.

The protein belongs to the transferase hexapeptide repeat family. LpxD subfamily. As to quaternary structure, homotrimer.

The catalysed reaction is a UDP-3-O-[(3R)-3-hydroxyacyl]-alpha-D-glucosamine + a (3R)-hydroxyacyl-[ACP] = a UDP-2-N,3-O-bis[(3R)-3-hydroxyacyl]-alpha-D-glucosamine + holo-[ACP] + H(+). It functions in the pathway bacterial outer membrane biogenesis; LPS lipid A biosynthesis. In terms of biological role, catalyzes the N-acylation of UDP-3-O-acylglucosamine using 3-hydroxyacyl-ACP as the acyl donor. Is involved in the biosynthesis of lipid A, a phosphorylated glycolipid that anchors the lipopolysaccharide to the outer membrane of the cell. The polypeptide is UDP-3-O-acylglucosamine N-acyltransferase (Bradyrhizobium sp. (strain BTAi1 / ATCC BAA-1182)).